A 381-amino-acid polypeptide reads, in one-letter code: Molybdenum import ATP-binding protein ModC (381 aa).

Residues 5 to 238 enclose the ABC transporter domain; the sequence is SRSIQAQFRG…PALPLAASRD (234 aa). 37–44 provides a ligand contact to ATP; sequence GPSGCGKS. Residues 297–367 form the Mop domain; that stretch reads NTSILNVLPA…VKGVALAPGR (71 aa).

It belongs to the ABC transporter superfamily. Molybdate importer (TC 3.A.1.8) family. As to quaternary structure, the complex is composed of two ATP-binding proteins (ModC), two transmembrane proteins (ModB) and a solute-binding protein (ModA).

It localises to the cell inner membrane. It catalyses the reaction molybdate(out) + ATP + H2O = molybdate(in) + ADP + phosphate + H(+). In terms of biological role, part of the ABC transporter complex ModABC involved in molybdenum import. Responsible for energy coupling to the transport system. This chain is Molybdenum import ATP-binding protein ModC, found in Rhodopseudomonas palustris (strain BisB18).